Consider the following 265-residue polypeptide: 5'-nucleotidase SurE (265 aa).

A divalent metal cation is bound by residues D11, D12, S43, and N101.

The protein belongs to the SurE nucleotidase family. The cofactor is a divalent metal cation.

Its subcellular location is the cytoplasm. It carries out the reaction a ribonucleoside 5'-phosphate + H2O = a ribonucleoside + phosphate. Nucleotidase that shows phosphatase activity on nucleoside 5'-monophosphates. The polypeptide is 5'-nucleotidase SurE (Synechococcus sp. (strain CC9311)).